Consider the following 335-residue polypeptide: Glyceraldehyde-3-phosphate dehydrogenase, cytosolic (335 aa).

NAD(+)-binding positions include 13–14, D35, and R80; that span reads RI. Residues 151 to 153, T182, 211 to 212, and R234 each bind D-glyceraldehyde 3-phosphate; these read SCT and TG. The Nucleophile role is filled by C152. N316 is a binding site for NAD(+).

The protein belongs to the glyceraldehyde-3-phosphate dehydrogenase family. As to quaternary structure, homotetramer.

The protein resides in the cytoplasm. It catalyses the reaction D-glyceraldehyde 3-phosphate + phosphate + NAD(+) = (2R)-3-phospho-glyceroyl phosphate + NADH + H(+). It functions in the pathway carbohydrate degradation; glycolysis; pyruvate from D-glyceraldehyde 3-phosphate: step 1/5. This chain is Glyceraldehyde-3-phosphate dehydrogenase, cytosolic (GAPC), found in Gracilaria gracilis (Red alga).